A 245-amino-acid polypeptide reads, in one-letter code: Uridylate kinase (245 aa).

Residue 15 to 18 coordinates ATP; it reads KLSG. The tract at residues 23-28 is involved in allosteric activation by GTP; the sequence is GEEGFG. Gly-57 contacts UMP. ATP contacts are provided by Gly-58 and Arg-62. UMP-binding positions include Asp-77 and 138–145; that span reads TGNPFCTT. ATP-binding residues include Thr-165, Tyr-171, and Asp-174.

Belongs to the UMP kinase family. Homohexamer.

The protein localises to the cytoplasm. The enzyme catalyses UMP + ATP = UDP + ADP. Its pathway is pyrimidine metabolism; CTP biosynthesis via de novo pathway; UDP from UMP (UMPK route): step 1/1. Allosterically activated by GTP. Inhibited by UTP. Functionally, catalyzes the reversible phosphorylation of UMP to UDP. The protein is Uridylate kinase of Shewanella putrefaciens (strain CN-32 / ATCC BAA-453).